A 205-amino-acid polypeptide reads, in one-letter code: Potassium-transporting ATPase KdpC subunit (205 aa).

The helical transmembrane segment at 9–29 (VFAVLFLFILGFVYPTVTSLI) threads the bilayer.

The protein belongs to the KdpC family. The system is composed of three essential subunits: KdpA, KdpB and KdpC.

It localises to the cell membrane. Part of the high-affinity ATP-driven potassium transport (or Kdp) system, which catalyzes the hydrolysis of ATP coupled with the electrogenic transport of potassium into the cytoplasm. This subunit acts as a catalytic chaperone that increases the ATP-binding affinity of the ATP-hydrolyzing subunit KdpB by the formation of a transient KdpB/KdpC/ATP ternary complex. This Thermoplasma acidophilum (strain ATCC 25905 / DSM 1728 / JCM 9062 / NBRC 15155 / AMRC-C165) protein is Potassium-transporting ATPase KdpC subunit.